The following is a 157-amino-acid chain: Glutaredoxin-2, mitochondrial (157 aa).

The transit peptide at 1–18 (MYWRRAALVGTRLIPVRS) directs the protein to the mitochondrion. S20 is modified (phosphoserine). The Glutaredoxin domain occupies 51–151 (VNQIQETISN…PLVHQCHLKN (101 aa)). Residue C62 participates in [2Fe-2S] cluster binding. K68 is a glutathione binding site. An S-glutathionyl cysteine; alternate modification is found at C71. C71 and C74 are disulfide-bonded. Glutathione is bound by residues Q103 and V115. C147 provides a ligand contact to [2Fe-2S] cluster.

Belongs to the glutaredoxin family. Monomer; active form. Homodimer; inactive form. The homodimer is probably linked by 1 2Fe-2S cluster.

It localises to the mitochondrion. With respect to regulation, the 2Fe-2S present in the homodimer leads to inactivation of the enzyme. The 2Fe-2S may serve as a redox sensor: the presence of one-electron oxidants or reductants leading to the loss of the 2Fe-2S cluster, subsequent monomerization and activation of the enzyme. Functionally, glutathione-dependent oxidoreductase that facilitates the maintenance of mitochondrial redox homeostasis upon induction of apoptosis by oxidative stress. Involved in response to hydrogen peroxide and regulation of apoptosis caused by oxidative stress. Acts as a very efficient catalyst of monothiol reactions because of its high affinity for protein glutathione-mixed disulfides. Can receive electrons not only from glutathione (GSH), but also from thioredoxin reductase supporting both monothiol and dithiol reactions. Efficiently catalyzes both glutathionylation and deglutathionylation of mitochondrial complex I, which in turn regulates the superoxide production by the complex. Overexpression decreases the susceptibility to apoptosis and prevents loss of cardiolipin and cytochrome c release. This is Glutaredoxin-2, mitochondrial (GLRX2) from Bos taurus (Bovine).